Consider the following 167-residue polypeptide: Heme-degrading monooxygenase (167 aa).

The segment at Met1–Gly50 is important for catalysis. The 88-residue stretch at Val67–Glu154 folds into the ABM domain.

Belongs to the antibiotic biosynthesis monooxygenase family. In terms of assembly, monomer.

It is found in the cytoplasm. Functionally, catalyzes the degradation of heme to biliverdin in the presence of a suitable electron donor such as ascorbate, with the subsequent release of iron. Hardly any CO is released by the heme degradation reaction. Binds heme. Allows bacterial pathogens to use the host heme as an iron source. Release of iron from heme may play a crucial role in the pathogenicity of L.monocytogenes. The polypeptide is Heme-degrading monooxygenase (Listeria monocytogenes serovar 1/2a (strain ATCC BAA-679 / EGD-e)).